A 414-amino-acid polypeptide reads, in one-letter code: Histidine--tRNA ligase (414 aa).

It belongs to the class-II aminoacyl-tRNA synthetase family. In terms of assembly, homodimer.

Its subcellular location is the cytoplasm. The enzyme catalyses tRNA(His) + L-histidine + ATP = L-histidyl-tRNA(His) + AMP + diphosphate + H(+). This is Histidine--tRNA ligase from Rickettsia africae (strain ESF-5).